Consider the following 126-residue polypeptide: MNLDFAKSDGLVTAVIQDHASGRVLMVGYMNQEAFNKTVETGFATFWSRSRKKLWLKGESSGHRLVVKEISTDCDLDAVLVKVEAQGPGVCHEGYESCFFRRLDAGEWKVADNPTYDPGAVYGGKS.

Residue Asp73 coordinates Mg(2+). A Zn(2+)-binding site is contributed by Cys74. Mg(2+) is bound by residues Asp75 and Asp77. Residues Cys91 and Cys98 each coordinate Zn(2+).

The protein belongs to the PRA-CH family. As to quaternary structure, homodimer. The cofactor is Mg(2+). Requires Zn(2+) as cofactor.

The protein resides in the cytoplasm. The catalysed reaction is 1-(5-phospho-beta-D-ribosyl)-5'-AMP + H2O = 1-(5-phospho-beta-D-ribosyl)-5-[(5-phospho-beta-D-ribosylamino)methylideneamino]imidazole-4-carboxamide. It functions in the pathway amino-acid biosynthesis; L-histidine biosynthesis; L-histidine from 5-phospho-alpha-D-ribose 1-diphosphate: step 3/9. Catalyzes the hydrolysis of the adenine ring of phosphoribosyl-AMP. This is Phosphoribosyl-AMP cyclohydrolase from Solibacter usitatus (strain Ellin6076).